Reading from the N-terminus, the 101-residue chain is Cell cycle protein GpsB (101 aa).

Positions 34 to 71 (LDMVIKDYETFNQEIEKLQQENLHLSKQLEEAVEQGKR) form a coiled coil.

It belongs to the GpsB family. Forms polymers through the coiled coil domains. Interacts with PBP1, MreC and EzrA.

The protein localises to the cytoplasm. Its function is as follows. Divisome component that associates with the complex late in its assembly, after the Z-ring is formed, and is dependent on DivIC and PBP2B for its recruitment to the divisome. Together with EzrA, is a key component of the system that regulates PBP1 localization during cell cycle progression. Its main role could be the removal of PBP1 from the cell pole after pole maturation is completed. Also contributes to the recruitment of PBP1 to the division complex. Not essential for septum formation. The chain is Cell cycle protein GpsB from Bacillus pumilus (strain SAFR-032).